The following is a 590-amino-acid chain: DNA primase (590 aa).

The segment at C37–C61 adopts a CHC2-type zinc-finger fold. Residues G255 to P337 enclose the Toprim domain. Mg(2+)-binding residues include E261, D305, and D307.

It belongs to the DnaG primase family. Monomer. Interacts with DnaB. Zn(2+) is required as a cofactor. Mg(2+) serves as cofactor.

It carries out the reaction ssDNA + n NTP = ssDNA/pppN(pN)n-1 hybrid + (n-1) diphosphate.. RNA polymerase that catalyzes the synthesis of short RNA molecules used as primers for DNA polymerase during DNA replication. This chain is DNA primase, found in Neisseria meningitidis serogroup A / serotype 4A (strain DSM 15465 / Z2491).